Consider the following 44-residue polypeptide: Thymosin beta-10 (44 aa).

It belongs to the thymosin beta family.

Its subcellular location is the cytoplasm. It localises to the cytoskeleton. Functionally, plays an important role in the organization of the cytoskeleton. Binds to and sequesters actin monomers (G actin) and therefore inhibits actin polymerization. The chain is Thymosin beta-10 from Torpedo marmorata (Marbled electric ray).